The following is a 462-amino-acid chain: L-seryl-tRNA(Sec) selenium transferase (462 aa).

Position 293 is an N6-(pyridoxal phosphate)lysine (K293).

It belongs to the SelA family. Pyridoxal 5'-phosphate is required as a cofactor.

It localises to the cytoplasm. It catalyses the reaction L-seryl-tRNA(Sec) + selenophosphate + H(+) = L-selenocysteinyl-tRNA(Sec) + phosphate. Its pathway is aminoacyl-tRNA biosynthesis; selenocysteinyl-tRNA(Sec) biosynthesis; selenocysteinyl-tRNA(Sec) from L-seryl-tRNA(Sec) (bacterial route): step 1/1. Converts seryl-tRNA(Sec) to selenocysteinyl-tRNA(Sec) required for selenoprotein biosynthesis. This Clostridium botulinum (strain Langeland / NCTC 10281 / Type F) protein is L-seryl-tRNA(Sec) selenium transferase.